A 354-amino-acid chain; its full sequence is Adenine deaminase (354 aa).

Residues H19, H21, and H211 each coordinate Zn(2+). E214 (proton donor) is an active-site residue. Residue D291 participates in Zn(2+) binding. D292 is a binding site for substrate.

This sequence belongs to the metallo-dependent hydrolases superfamily. Adenosine and AMP deaminases family. Adenine deaminase type 2 subfamily. Requires Zn(2+) as cofactor.

It localises to the cytoplasm. The protein resides in the nucleus. The catalysed reaction is adenine + H2O + H(+) = hypoxanthine + NH4(+). Functionally, catalyzes the hydrolytic deamination of adenine to hypoxanthine. Plays an important role in the purine salvage pathway and in nitrogen catabolism. The polypeptide is Adenine deaminase (aah1) (Aspergillus fumigatus (strain ATCC MYA-4609 / CBS 101355 / FGSC A1100 / Af293) (Neosartorya fumigata)).